The following is a 706-amino-acid chain: Termination factor NPH-I homolog (706 aa).

One can recognise a Helicase ATP-binding domain in the interval 62–227; the sequence is IGQGENTRGL…VPCFNMLSGR (166 aa). 75–82 is a binding site for ATP; the sequence is HQMGMGKT. A DEAH box motif is present at residues 168-171; the sequence is DEAH. One can recognise a Helicase C-terminal domain in the interval 417 to 599; it reads QCLQPLKVLE…HLNSAFRDLL (183 aa).

This sequence belongs to the DEAD box helicase family. DEAH subfamily. In terms of assembly, part of the viral DNA-directed RNA polymerase that consists of 8 polII-like subunits (RPB1, RPB2, RPB3, RPB5, RPB6, RPB7, RPB9, RPB10), a capping enzyme and a termination factor.

The protein resides in the virion. Its function is as follows. Putative DNA-dependent ATPase required for providing the needed energy to achieve the termination of early transcripts. The polypeptide is Termination factor NPH-I homolog (African swine fever virus (isolate Warthog/Namibia/Wart80/1980) (ASFV)).